We begin with the raw amino-acid sequence, 471 residues long: Lincomycin resistance protein LmrB (471 aa).

12 helical membrane passes run 13–35, 55–77, 84–106, 111–133, 140–162, 167–189, 201–223, 227–249, 269–291, 329–351, 358–380, and 445–467; these read PIPI…TALN, LTTG…LQWF, FTAV…FAML, VVQA…LIFP, AMGM…SGLI, TWNW…GMKF, IDIL…FSSA, GWGS…LFVW, FTLG…ILLP, AYGP…FFLT, SALT…MMPA, and GIQN…SLFI.

Belongs to the major facilitator superfamily. EmrB family.

It localises to the cell membrane. Proton-dependent transporter. May mediate the efflux of lincomycin. In Listeria monocytogenes serovar 1/2a (strain ATCC BAA-679 / EGD-e), this protein is Lincomycin resistance protein LmrB (lmrB).